The chain runs to 215 residues: uncharacterized protein (215 aa).

6 helical membrane-spanning segments follow: residues 21–40 (IIKY…VLIN), 50–69 (LIFS…SVIF), 95–117 (FFAI…YVLF), 122–144 (LEII…LVVL), 156–178 (ANFV…GLIL), and 183–205 (LQLI…FLSS).

Belongs to the CcmB/CycW/HelB family.

The protein localises to the cell membrane. This is an uncharacterized protein from Rickettsia conorii (strain ATCC VR-613 / Malish 7).